Here is a 678-residue protein sequence, read N- to C-terminus: MAAQRKAQDEYGAASITILEGLEAVRKRPGMYVGSTGERGLHHLIWEVVDNSVDEAMAGYATQVDVRLFDDGSVEVADNGRGIPVAVHATGVPTVDVVMTQLHAGGKFGGKDSGYNVSGGLHGVGVSVVNALSTRVEVDIKRDGYEWSQFYDKAVPGILKQGEATEATGTTIRFWADPDIFETTKYDFGTVARRIQEVAFLNKGLTINLVDERVKQDEVVDDVVSDTAEAPVAMTVEEKSTESSAPHKVRHRTFHYPGGLVDFVKHINRTKTPIQQSIIDFDGKGAGHEVEVAMQWNGGYSESVHTFANTINTHEGGTHEEGFRSALTSVVNKYAKDKKLLKDKDPNLTGDDIREGLAAVISVKVSEPQFEGQTKTKLGNTEVKSFVQRVCNEQLIHWFEANPVDAKAVVNKAISSAQARIAARKARELVRRKSATDLGGLPGKLADCRSTDPRSSELYVVEGDSAGGSAKSGRDSMFQAILPLRGKIINVEKARIDRVLKNTEVQAIITALGTGIHDEFDISRLRYHKIVLMADADVDGQHISTLLLTLLFRFMRPLIEHGYVFLAQPPLYKLKWQRMDPEFAYSDSERDGLLETGLKLGKKINKEDGIQRYKGLGEMDAKELWETTMDPSVRVLRQVTLDDAAAADELFSILMGEDVDARRSFITRNAKDVRFLDV.

Residues 456–570 (SELYVVEGDS…HGYVFLAQPP (115 aa)) enclose the Toprim domain. Positions 462, 535, and 537 each coordinate Mg(2+).

This sequence belongs to the type II topoisomerase GyrB family. Heterotetramer, composed of two GyrA and two GyrB chains. In the heterotetramer, GyrA contains the active site tyrosine that forms a transient covalent intermediate with the DNA, while GyrB binds cofactors catalyzes ATP hydrolysis. Requires Mg(2+) as cofactor. The cofactor is Mn(2+). It depends on Ca(2+) as a cofactor.

It is found in the cytoplasm. The enzyme catalyses ATP-dependent breakage, passage and rejoining of double-stranded DNA.. DNA supercoiling is inhibited by fluoroquinolones; IC(50) 1 ug/ml for sitafloxacin. In terms of biological role, a type II topoisomerase that negatively supercoils closed circular double-stranded (ds) DNA in an ATP-dependent manner to modulate DNA topology and maintain chromosomes in an underwound state. Negative supercoiling favors strand separation, and DNA replication, transcription, recombination and repair, all of which involve strand separation. Also able to catalyze the interconversion of other topological isomers of dsDNA rings, including catenanes and knotted rings. Type II topoisomerases break and join 2 DNA strands simultaneously in an ATP-dependent manner. This Mycobacterium leprae (strain TN) protein is DNA gyrase subunit B.